Here is a 334-residue protein sequence, read N- to C-terminus: Nucleoid-associated protein plu2870 (334 aa).

The protein belongs to the YejK family.

It is found in the cytoplasm. Its subcellular location is the nucleoid. The protein is Nucleoid-associated protein plu2870 of Photorhabdus laumondii subsp. laumondii (strain DSM 15139 / CIP 105565 / TT01) (Photorhabdus luminescens subsp. laumondii).